The chain runs to 101 residues: Small ribosomal subunit protein uS14 (101 aa).

The span at 1 to 10 (MAKKSSIEKN) shows a compositional bias: basic and acidic residues. Positions 1–23 (MAKKSSIEKNNRRRKMTKNAAPK) are disordered. Residues 11 to 23 (NRRRKMTKNAAPK) show a composition bias toward basic residues.

Belongs to the universal ribosomal protein uS14 family. Part of the 30S ribosomal subunit. Contacts proteins S3 and S10.

Functionally, binds 16S rRNA, required for the assembly of 30S particles and may also be responsible for determining the conformation of the 16S rRNA at the A site. This chain is Small ribosomal subunit protein uS14, found in Rhodopseudomonas palustris (strain BisB5).